A 290-amino-acid polypeptide reads, in one-letter code: Zinc-finger homeodomain protein 2 (290 aa).

A compositionally biased stretch (acidic residues) spans 1-15; that stretch reads MDFDDHDEGDGDEEM. Residues 1–59 are disordered; it reads MDFDDHDEGDGDEEMPPMPLSSGYDAPMQPGLGGGGGGVPKPGGGVGGGGGGGGGGGGG. Gly residues predominate over residues 31–59; the sequence is GLGGGGGGVPKPGGGVGGGGGGGGGGGGG. The ZF-HD dimerization-type; degenerate zinc finger occupies 63–112; the sequence is YRECLKNHAVGIGGHAVDGCGEFMASGEEGSIDALRCAACGCHRNFHRKE. Positions 226–289 form a DNA-binding region, homeobox; the sequence is KKRFRTKFTQ…NNKHTLGKKA (64 aa).

As to quaternary structure, homo- and heterodimer with other ZFHD proteins.

It localises to the nucleus. Its function is as follows. Putative transcription factor. This is Zinc-finger homeodomain protein 2 (ZHD2) from Oryza sativa subsp. japonica (Rice).